A 468-amino-acid chain; its full sequence is FAD-linked oxidoreductase azaG (468 aa).

A signal peptide spans 1 to 16 (MQLSGILSWLLSWLWA). Asn-44 is a glycosylation site (N-linked (GlcNAc...) asparagine). The region spanning 54 to 228 (TVHGAPHYLG…TSATYRTHQA (175 aa)) is the FAD-binding PCMH-type domain. Asn-272, Asn-348, and Asn-464 each carry an N-linked (GlcNAc...) asparagine glycan.

It belongs to the oxygen-dependent FAD-linked oxidoreductase family. The cofactor is FAD.

The protein operates within secondary metabolite biosynthesis. Functionally, FAD-linked oxidoreductase; part of the gene cluster that mediates the biosynthesis of azaphilones, a class of fungal metabolites characterized by a highly oxygenated pyrano-quinone bicyclic core and exhibiting a broad range of bioactivities. In the first step, the non-reducing polyketide synthase azaA forms the hexaketide precursor from successive condensations of five malonyl-CoA units, presumably with a simple acetyl-CoA starter unit. The reactive polyketide chain then undergoes a PT-mediated C2-C7 cyclization to afford the aromatic ring and is eventually released as an aldehyde through the R-domain. The putative ketoreductase azaE is proposed to catalyze the reduction of the terminal ketone resulting in the early culture product FK17-P2a. The monooxygenase azaH was demonstrated to be the only enzyme required to convert FK17-P2a to azanigerone E. AzaH first hydroxylates the benzaldehyde intermediate FK17-P2a at C4, which triggers the formation of the pyran-ring to afford azanigerone E. In parallel, the 2,4-dimethylhexanoyl chain is synthesized by the HR-PKS azaB and is proposed to be transferred to the C4-hydroxyl of azanigerone E by the acyltransferase azaD directly from the ACP domain of azaB. Alternatively, the 2,4-dimethyl-hexanoyl chain may be offloaded from the HR-PKS as a carboxylic acid and converted to an acyl-CoA by azaF. The resulting acyl-CoA molecule could then be taken up as a substrate by AzaD to form azanigerone B. To yield the carboxylic acid substituent in azanigerone A, the hydroxypropyl side chain of azanigerone B would need to undergo a C-C oxidative cleavage catalyzed by cytochrome P450 AzaI. AzaI is proposed to act on a vicinal diol that leads to a C-C bond scission either through an alkoxyradical intermediate or a peroxy complex. In the biosynthesis of azanigerone A, azanigerone B first undergoes hydroxylation at C10, possibly catalyzed by one of the two FAD-dependent monooxygenases encoded in the cluster, azaG or azaL, resulting in the vicinal diol azanigerone C. Oxidative cleavage of azanigerone C by azaI would yield the corresponding aldehyde derivative of azanigerone A. Finally, the dehydrogenase azaJ is proposed to convert the aldehyde functional group into the carboxylic acid, completing the conversion from azanigerone B to azanigerone A. Alternatively, the oxidation of aldehyde to carboxylic acid may be catalyzed by the same P450 enzyme azaI via consecutive oxidation or by endogenous alcohol dehydrogenase. The sequence is that of FAD-linked oxidoreductase azaG from Aspergillus niger (strain ATCC 1015 / CBS 113.46 / FGSC A1144 / LSHB Ac4 / NCTC 3858a / NRRL 328 / USDA 3528.7).